The sequence spans 409 residues: Lactadherin (409 aa).

EGF-like domains are found at residues 2–41 and 44–88; these read SGDF…LICN and EKGP…IHCE. 3 cysteine pairs are disulfide-bonded: Cys-6–Cys-17, Cys-11–Cys-29, and Cys-31–Cys-40. Asn-41 carries N-linked (GlcNAc...) asparagine glycosylation. Intrachain disulfides connect Cys-48–Cys-59, Cys-53–Cys-76, Cys-78–Cys-87, Cys-91–Cys-247, Cys-234–Cys-238, and Cys-252–Cys-409. A Cell attachment site motif is present at residues 67 to 69; the sequence is RGD. 2 F5/8 type C domains span residues 91 to 247 and 252 to 409; these read CNAP…LLGC and CAEP…LLGC. The N-linked (GlcNAc...) asparagine glycan is linked to Asn-372.

In terms of tissue distribution, mammary epithelial cell surfaces and spermatozoan. Also present in testis, epididymis, uterus, adrenal gland, tonsil, muscle, heart, lymphatic gland, thymus and kidney but not spleen, liver, lung or brain.

The protein resides in the membrane. It localises to the secreted. The protein localises to the cytoplasmic vesicle. Its subcellular location is the secretory vesicle. It is found in the acrosome membrane. In terms of biological role, contributes to phagocytic removal of apoptotic cells in many tissues. Plays an important role in the maintenance of intestinal epithelial homeostasis and the promotion of mucosal healing. Promotes VEGF-dependent neovascularization. Specific ligand for the alpha-v/beta-3 and alpha-v/beta-5 receptors. Also binds to phosphatidylserine-enriched cell surfaces in a receptor-independent manner. Zona pellucida-binding protein which may play a role in gamete interaction. The sequence is that of Lactadherin (MFGE8) from Sus scrofa (Pig).